Consider the following 88-residue polypeptide: HssA/B-like protein 12 (88 aa).

This sequence belongs to the hssA/B family.

This chain is HssA/B-like protein 12 (hssl12), found in Dictyostelium discoideum (Social amoeba).